Reading from the N-terminus, the 150-residue chain is Seminal ribonuclease (150 aa).

An N-terminal signal peptide occupies residues 1–26; sequence MALKSLVVLPLLVLVLLLVRVQPSLG. Substrate contacts are provided by K33 and R36. Residue H38 is the Proton acceptor of the active site. 4 disulfide bridges follow: C52-C110, C66-C121, C84-C136, and C91-C98. Residues 67 to 71 and K92 contribute to the substrate site; that span reads KPVNT. At N93 the chain carries Deamidated asparagine; by deterioration. R111 provides a ligand contact to substrate. The active-site Proton donor is H145.

Belongs to the pancreatic ribonuclease family. In terms of assembly, homodimer; disulfide-linked. Seminal plasma. Can reach 3% of the protein content of this fluid.

It localises to the secreted. It catalyses the reaction an [RNA] containing cytidine + H2O = an [RNA]-3'-cytidine-3'-phosphate + a 5'-hydroxy-ribonucleotide-3'-[RNA].. The catalysed reaction is an [RNA] containing uridine + H2O = an [RNA]-3'-uridine-3'-phosphate + a 5'-hydroxy-ribonucleotide-3'-[RNA].. Allosteric regulation by both substrate and reaction products. Functionally, this enzyme hydrolyzes both single- and double-stranded RNA. In Bos taurus (Bovine), this protein is Seminal ribonuclease (SRN).